Here is a 181-residue protein sequence, read N- to C-terminus: Large ribosomal subunit protein uL5c (181 aa).

Belongs to the universal ribosomal protein uL5 family. As to quaternary structure, part of the 50S ribosomal subunit; contacts the 5S rRNA.

It is found in the plastid. It localises to the chloroplast. Functionally, binds 5S rRNA, forms part of the central protuberance of the 50S subunit. The sequence is that of Large ribosomal subunit protein uL5c (rpl5) from Heterosigma akashiwo (strain NIES-293 / 8280G21-1).